We begin with the raw amino-acid sequence, 449 residues long: Tubulin beta-5 chain (449 aa).

GTP contacts are provided by Gln-11, Glu-70, Ser-139, Gly-143, Thr-144, Gly-145, Asn-205, and Asn-227. A Mg(2+)-binding site is contributed by Glu-70. Residues 427–449 (QDATADEEGEYDVEEEEEGDYET) are disordered. A compositionally biased stretch (acidic residues) spans 430-449 (TADEEGEYDVEEEEEGDYET).

Belongs to the tubulin family. Dimer of alpha and beta chains. A typical microtubule is a hollow water-filled tube with an outer diameter of 25 nm and an inner diameter of 15 nM. Alpha-beta heterodimers associate head-to-tail to form protofilaments running lengthwise along the microtubule wall with the beta-tubulin subunit facing the microtubule plus end conferring a structural polarity. Microtubules usually have 13 protofilaments but different protofilament numbers can be found in some organisms and specialized cells. Mg(2+) is required as a cofactor.

The protein localises to the cytoplasm. It is found in the cytoskeleton. In terms of biological role, tubulin is the major constituent of microtubules, a cylinder consisting of laterally associated linear protofilaments composed of alpha- and beta-tubulin heterodimers. Microtubules grow by the addition of GTP-tubulin dimers to the microtubule end, where a stabilizing cap forms. Below the cap, tubulin dimers are in GDP-bound state, owing to GTPase activity of alpha-tubulin. The polypeptide is Tubulin beta-5 chain (TUBB5) (Arabidopsis thaliana (Mouse-ear cress)).